A 1035-amino-acid chain; its full sequence is Condensin complex subunit 3 (1035 aa).

HEAT repeat units follow at residues Arg113–Glu150 and Glu153–Thr191. Ser198 carries the post-translational modification Phosphoserine. The stretch at Glu201–Tyr239 is one HEAT 3 repeat. The tract at residues Glu500 to Asp536 is disordered. HEAT repeat units lie at residues Ile597–Lys635 and Val827–Gln864. A compositionally biased stretch (basic and acidic residues) spans Glu909 to Asn919. 2 disordered regions span residues Glu909–Phe934 and Thr959–Met995. Composition is skewed to polar residues over residues Asn920 to Phe934 and Thr959 to Ser973. Ser933 bears the Phosphoserine mark. At Ser981 the chain carries Phosphoserine. The segment covering Ile986 to Met995 has biased composition (polar residues). Ser1008 is subject to Phosphoserine. A disordered region spans residues Pro1012–Cys1035.

Belongs to the CND3 (condensin subunit 3) family. As to quaternary structure, component of the condensin complex, which contains the SMC2 and SMC4 heterodimer, and three non SMC subunits that probably regulate the complex: BRN1, YCS4 and YCG1/YCS5.

It localises to the nucleus. The protein localises to the cytoplasm. It is found in the chromosome. Its function is as follows. Regulatory subunit of the condensin complex, a complex required for conversion of interphase chromatin into mitotic-like condense chromosomes. The condensin complex probably introduces positive supercoils into relaxed DNA in the presence of type I topoisomerases and converts nicked DNA into positive knotted forms in the presence of type II topoisomerases. The condensin complex probably also plays a role during interphase. This Saccharomyces cerevisiae (strain ATCC 204508 / S288c) (Baker's yeast) protein is Condensin complex subunit 3 (YCG1).